Here is a 116-residue protein sequence, read N- to C-terminus: Non-specific lipid-transfer protein (116 aa).

An N-terminal signal peptide occupies residues 1-23 (MASMKVVCVALIMCIVIAPMAES). 4 disulfide bridges follow: cysteine 27/cysteine 74, cysteine 37/cysteine 51, cysteine 52/cysteine 97, and cysteine 72/cysteine 111.

The protein belongs to the plant LTP family.

Plant non-specific lipid-transfer proteins transfer phospholipids as well as galactolipids across membranes. May play a role in wax or cutin deposition in the cell walls of expanding epidermal cells and certain secretory tissues. The polypeptide is Non-specific lipid-transfer protein (Cicer arietinum (Chickpea)).